The following is a 364-amino-acid chain: GDP-fucose transporter 1 (364 aa).

The next 8 helical transmembrane spans lie at 34 to 56 (FLLR…ISMV), 76 to 98 (VTFY…AACC), 111 to 130 (LRVA…MITF), 140 to 162 (VAFY…YLLL), 167 to 185 (SFYA…WLGV), 195 to 214 (SWLG…LNAI), 227 to 249 (IWRL…LLLL), and 264 to 286 (AHFW…VTGL).

It belongs to the TPT transporter family. SLC35C subfamily.

It is found in the golgi apparatus membrane. The enzyme catalyses GMP(out) + GDP-beta-L-fucose(in) = GMP(in) + GDP-beta-L-fucose(out). Antiporter specific for GDP-l-fucose and depending on the concomitant reverse transport of GMP. Involved in GDP-fucose import from the cytoplasm into the Golgi lumen. This chain is GDP-fucose transporter 1, found in Homo sapiens (Human).